We begin with the raw amino-acid sequence, 395 residues long: Putative 8-amino-7-oxononanoate synthase (395 aa).

Substrate is bound at residue arginine 23. Position 110-111 (110-111 (GF)) interacts with pyridoxal 5'-phosphate. Histidine 135 contributes to the substrate binding site. Residues serine 182, 207–210 (DEAH), and 239–242 (TFSK) each bind pyridoxal 5'-phosphate. Lysine 242 carries the post-translational modification N6-(pyridoxal phosphate)lysine. Threonine 356 provides a ligand contact to substrate.

The protein belongs to the class-II pyridoxal-phosphate-dependent aminotransferase family. BioF subfamily. In terms of assembly, homodimer. The cofactor is pyridoxal 5'-phosphate.

It carries out the reaction 6-carboxyhexanoyl-[ACP] + L-alanine + H(+) = (8S)-8-amino-7-oxononanoate + holo-[ACP] + CO2. It participates in cofactor biosynthesis; biotin biosynthesis. Functionally, catalyzes the decarboxylative condensation of pimeloyl-[acyl-carrier protein] and L-alanine to produce 8-amino-7-oxononanoate (AON), [acyl-carrier protein], and carbon dioxide. The sequence is that of Putative 8-amino-7-oxononanoate synthase (bioF) from Bacillus anthracis.